Reading from the N-terminus, the 415-residue chain is Serine hydroxymethyltransferase 2 (415 aa).

(6S)-5,6,7,8-tetrahydrofolate is bound by residues Leu121 and 125-127 (GHL). Lys229 carries the N6-(pyridoxal phosphate)lysine modification.

Belongs to the SHMT family. Homodimer. The cofactor is pyridoxal 5'-phosphate.

The protein localises to the cytoplasm. The catalysed reaction is (6R)-5,10-methylene-5,6,7,8-tetrahydrofolate + glycine + H2O = (6S)-5,6,7,8-tetrahydrofolate + L-serine. It functions in the pathway one-carbon metabolism; tetrahydrofolate interconversion. It participates in amino-acid biosynthesis; glycine biosynthesis; glycine from L-serine: step 1/1. Functionally, catalyzes the reversible interconversion of serine and glycine with tetrahydrofolate (THF) serving as the one-carbon carrier. This reaction serves as the major source of one-carbon groups required for the biosynthesis of purines, thymidylate, methionine, and other important biomolecules. Also exhibits THF-independent aldolase activity toward beta-hydroxyamino acids, producing glycine and aldehydes, via a retro-aldol mechanism. The chain is Serine hydroxymethyltransferase 2 from Bordetella bronchiseptica (strain ATCC BAA-588 / NCTC 13252 / RB50) (Alcaligenes bronchisepticus).